The sequence spans 414 residues: GLABROUS1 enhancer-binding protein-like 3 (414 aa).

Disordered regions lie at residues 36 to 57 (QLRT…LSSS) and 167 to 191 (QAKD…DRDV). The segment covering 38 to 50 (RTTTTRTTTTRTT) has biased composition (low complexity). The interval 382–403 (LINEWKALFVDEQRLCVKKLTF) is non-canonical leucine-zipper.

It belongs to the GeBP family. In terms of assembly, homo- and heterodimers. Interacts with GEBP, GPL1 and GPL2. Interacts with GEBP. In terms of tissue distribution, expressed in the apical meristem and young leaf primordia. Detected in the vascular tissues of rosette leaves, in primary and secondary roots and at the base of flowers and siliques.

The protein localises to the nucleus. Probable transcription factor. Involved in stress responses. Plays a repressive role in cell expansion by counteracting the positive role of CPR5 in this process, but does not regulate cell proliferation or endoreduplication. This is GLABROUS1 enhancer-binding protein-like 3 from Arabidopsis thaliana (Mouse-ear cress).